Consider the following 560-residue polypeptide: DNA ligase B (560 aa).

The active-site N6-AMP-lysine intermediate is lysine 124.

Belongs to the NAD-dependent DNA ligase family. LigB subfamily.

It catalyses the reaction NAD(+) + (deoxyribonucleotide)n-3'-hydroxyl + 5'-phospho-(deoxyribonucleotide)m = (deoxyribonucleotide)n+m + AMP + beta-nicotinamide D-nucleotide.. In terms of biological role, catalyzes the formation of phosphodiester linkages between 5'-phosphoryl and 3'-hydroxyl groups in double-stranded DNA using NAD as a coenzyme and as the energy source for the reaction. The chain is DNA ligase B from Shigella sonnei (strain Ss046).